Reading from the N-terminus, the 291-residue chain is Bifunctional protein FolD (291 aa).

NADP(+) is bound by residues glycine 166–glycine 168, isoleucine 191, and isoleucine 232.

Belongs to the tetrahydrofolate dehydrogenase/cyclohydrolase family. Homodimer.

The catalysed reaction is (6R)-5,10-methylene-5,6,7,8-tetrahydrofolate + NADP(+) = (6R)-5,10-methenyltetrahydrofolate + NADPH. It carries out the reaction (6R)-5,10-methenyltetrahydrofolate + H2O = (6R)-10-formyltetrahydrofolate + H(+). It functions in the pathway one-carbon metabolism; tetrahydrofolate interconversion. Its function is as follows. Catalyzes the oxidation of 5,10-methylenetetrahydrofolate to 5,10-methenyltetrahydrofolate and then the hydrolysis of 5,10-methenyltetrahydrofolate to 10-formyltetrahydrofolate. This chain is Bifunctional protein FolD, found in Aquifex aeolicus (strain VF5).